A 234-amino-acid polypeptide reads, in one-letter code: MFSQIVLLLSAFIYVASATARRGTIKGRLDLAASNITGFVSTRTSFKLYQIGNFSTEYPYTSTTMFQDDEGNFEFANLPLNDGVNETTYYVMYPASMDFNLKPNRILIEFKNLENGTLQLNAFKNFFGREYFPSKDITYPEKLQSMKVHPYITVELLHKAPIRSYLQARNVSIFSTGIVGNILNSRWKLAGVITLIALVVFPIIVEKLDPETARAIREEAKRKQREKYAAVASK.

The N-terminal stretch at 1–18 is a signal peptide; sequence MFSQIVLLLSAFIYVASA. The Lumenal portion of the chain corresponds to 19–188; it reads TARRGTIKGR…VGNILNSRWK (170 aa). Asparagine 35, asparagine 53, asparagine 85, asparagine 115, and asparagine 170 each carry an N-linked (GlcNAc...) asparagine glycan. The helical transmembrane segment at 189–209 threads the bilayer; sequence LAGVITLIALVVFPIIVEKLD. Residues 210 to 234 lie on the Cytoplasmic side of the membrane; it reads PETARAIREEAKRKQREKYAAVASK.

The protein belongs to the SOP4 family.

The protein localises to the endoplasmic reticulum membrane. Functionally, involved in the export of PMA1, possibly through the monitoring or assisting of PMA1 folding and acquisition of competence to enter vesicles. The protein is Protein SOP4 (SOP4) of Saccharomyces cerevisiae (strain ATCC 204508 / S288c) (Baker's yeast).